Consider the following 539-residue polypeptide: MKMASNDANPSDGSAANLVPEVNNEVMALEPVVGAAIAAPVAGQQNVIDPWIRNNFVQAPGGEFTVSPRNAPGEILWSAPLGPDLNPYLSHLSRMYNGYAGGFEVQVILAGNAFTAGKVIFAAVPPNFPTEGLSPSQVTMFPHIIVDVRQLEPVLIPLPDVRNNFYHYNQANDSTLKLIAMLYTPLRANNAGDDVFTVSCRVLTRPSPDFDFIFLVPPTVESRTKPFTVPVLTVEEMSNSRFPIPLEKLYTGPSSAFVVQPQNGRCTTDGVLLGTTQLSAVNICNFRGDVTHIAGSHDYTMNLASQNWSNYDPTEEIPAPLGTPDFVGKIQGLLTQTTRADGSTRAHKATVSTGSVHFTPKLGSVQFTTDTNNDFQAGQNTKFTPVGVIQDGDHHQNEPQQWSLPNYSGRTGHNVHLAPAVAPTFPGEQLLFFRSTMPGCSGYPNMNLDCLLPQEWVLHFYQEAAPAQSDVALLRFVNPDTGRVLFECKLHKSGYITVAHTGPYDLVLPPNGYFRFDSWVNQFYTLAPMGNGTGRRRAL.

Residues 1–221 form a shell domain region; it reads MKMASNDANP…FIFLVPPTVE (221 aa). Positions 222–274 are P1 sub-domain 1; the sequence is SRTKPFTVPVLTVEEMSNSRFPIPLEKLYTGPSSAFVVQPQNGRCTTDGVLLG. Residues 222–539 form a protruding domain region; the sequence is SRTKPFTVPV…GNGTGRRRAL (318 aa). A P2 sub-domain region spans residues 275–417; it reads TTQLSAVNIC…SGRTGHNVHL (143 aa). The segment at 418-539 is P1 sub-domain 2; it reads APAVAPTFPG…GNGTGRRRAL (122 aa).

Belongs to the caliciviridae capsid protein family. As to quaternary structure, homodimer. Homomultimer. Interacts with the minor capsid protein VP2. Interacts (via C-terminus) with host type I histo-blood group structures antigens at the surface of target cells. In terms of processing, may be cleaved by host protease to generate soluble capsid protein. Assembled capsid cannot be cleaved.

It localises to the virion. It is found in the host cytoplasm. Functionally, capsid protein self assembles to form an icosahedral capsid with a T=3 symmetry, about 38 nm in diameter, and consisting of 180 capsid proteins. A smaller form of capsid with a diameter of 23 nm might be capsid proteins assembled as icosahedron with T=1 symmetry. The capsid encapsulates the genomic RNA and is decorated with VP2 proteins. Attaches virion to target cells by binding histo-blood group antigens (HBGAs) present on gastroduodenal epithelial cells. The soluble capsid protein may play a role in viral immunoevasion. This is Capsid protein VP1 from Homo sapiens (Human).